A 488-amino-acid polypeptide reads, in one-letter code: Protein nucleotidyltransferase YdiU (488 aa).

ATP is bound by residues G91, G93, R94, K114, D126, G127, R177, and R184. D253 serves as the catalytic Proton acceptor. Residues N254 and D263 each coordinate Mg(2+). Residue D263 coordinates ATP.

This sequence belongs to the SELO family. It depends on Mg(2+) as a cofactor. Mn(2+) is required as a cofactor.

It catalyses the reaction L-seryl-[protein] + ATP = 3-O-(5'-adenylyl)-L-seryl-[protein] + diphosphate. It carries out the reaction L-threonyl-[protein] + ATP = 3-O-(5'-adenylyl)-L-threonyl-[protein] + diphosphate. The catalysed reaction is L-tyrosyl-[protein] + ATP = O-(5'-adenylyl)-L-tyrosyl-[protein] + diphosphate. The enzyme catalyses L-histidyl-[protein] + UTP = N(tele)-(5'-uridylyl)-L-histidyl-[protein] + diphosphate. It catalyses the reaction L-seryl-[protein] + UTP = O-(5'-uridylyl)-L-seryl-[protein] + diphosphate. It carries out the reaction L-tyrosyl-[protein] + UTP = O-(5'-uridylyl)-L-tyrosyl-[protein] + diphosphate. Functionally, nucleotidyltransferase involved in the post-translational modification of proteins. It can catalyze the addition of adenosine monophosphate (AMP) or uridine monophosphate (UMP) to a protein, resulting in modifications known as AMPylation and UMPylation. This chain is Protein nucleotidyltransferase YdiU, found in Bacillus cereus (strain ATCC 10987 / NRS 248).